The sequence spans 696 residues: DNA ligase (696 aa).

Residues Asp55–Asp59, Ser105–Leu106, and Glu137 contribute to the NAD(+) site. Catalysis depends on Lys139, which acts as the N6-AMP-lysine intermediate. Residues Arg160, Glu194, Lys310, and Lys334 each coordinate NAD(+). Zn(2+) is bound by residues Cys428, Cys431, Cys446, and Cys451. The BRCT domain maps to Asn615–Asp696.

It belongs to the NAD-dependent DNA ligase family. LigA subfamily. Mg(2+) is required as a cofactor. Mn(2+) serves as cofactor.

The catalysed reaction is NAD(+) + (deoxyribonucleotide)n-3'-hydroxyl + 5'-phospho-(deoxyribonucleotide)m = (deoxyribonucleotide)n+m + AMP + beta-nicotinamide D-nucleotide.. In terms of biological role, DNA ligase that catalyzes the formation of phosphodiester linkages between 5'-phosphoryl and 3'-hydroxyl groups in double-stranded DNA using NAD as a coenzyme and as the energy source for the reaction. It is essential for DNA replication and repair of damaged DNA. In Fusobacterium nucleatum subsp. nucleatum (strain ATCC 25586 / DSM 15643 / BCRC 10681 / CIP 101130 / JCM 8532 / KCTC 2640 / LMG 13131 / VPI 4355), this protein is DNA ligase.